A 464-amino-acid polypeptide reads, in one-letter code: NADH dehydrogenase [ubiquinone] flavoprotein 1, mitochondrial (464 aa).

A mitochondrion-targeting transit peptide spans 1 to 20 (MLAARRLLGWSLPARVSVRF). The residue at position 81 (Lys81) is an N6-acetyllysine; alternate. Position 81 is an N6-succinyllysine; alternate (Lys81). 87–96 (GRGGAGFPTG) is an NADH binding site. Lys104 is modified (N6-acetyllysine). 199-247 (RGAGAYICGEETALIESIEGKQGKPRLKPPFPADVGVFGCPTTVANVET) provides a ligand contact to FMN. Arg257 bears the Omega-N-methylarginine mark. Lys375 is subject to N6-acetyllysine. 4 residues coordinate [4Fe-4S] cluster: Cys379, Cys382, Cys385, and Cys425.

It belongs to the complex I 51 kDa subunit family. In terms of assembly, core subunit of respiratory chain NADH dehydrogenase (Complex I) which is composed of 45 different subunits. This is a component of the flavoprotein-sulfur (FP) fragment of the enzyme. Interacts with RAB5IF. Requires FMN as cofactor. [4Fe-4S] cluster serves as cofactor.

The protein localises to the mitochondrion inner membrane. The catalysed reaction is a ubiquinone + NADH + 5 H(+)(in) = a ubiquinol + NAD(+) + 4 H(+)(out). Its function is as follows. Core subunit of the mitochondrial membrane respiratory chain NADH dehydrogenase (Complex I) which catalyzes electron transfer from NADH through the respiratory chain, using ubiquinone as an electron acceptor. Part of the peripheral arm of the enzyme, where the electrons from NADH are accepted by flavin mononucleotide (FMN) and then passed along a chain of iron-sulfur clusters by electron tunnelling to the final acceptor ubiquinone. Contains FMN, which is the initial electron acceptor as well as one iron-sulfur cluster. This is NADH dehydrogenase [ubiquinone] flavoprotein 1, mitochondrial from Pongo pygmaeus (Bornean orangutan).